We begin with the raw amino-acid sequence, 434 residues long: Probable phosphoglucosamine mutase (434 aa).

The active-site Phosphoserine intermediate is S91. Residues S91, D229, D231, and D233 each coordinate Mg(2+). The residue at position 91 (S91) is a Phosphoserine.

Belongs to the phosphohexose mutase family. The cofactor is Mg(2+). Post-translationally, activated by phosphorylation.

The catalysed reaction is alpha-D-glucosamine 1-phosphate = D-glucosamine 6-phosphate. Its function is as follows. Catalyzes the conversion of glucosamine-6-phosphate to glucosamine-1-phosphate. This Methanosarcina barkeri (strain Fusaro / DSM 804) protein is Probable phosphoglucosamine mutase.